A 179-amino-acid chain; its full sequence is Large ribosomal subunit protein uL5 (179 aa).

It belongs to the universal ribosomal protein uL5 family. In terms of assembly, part of the 50S ribosomal subunit; part of the 5S rRNA/L5/L18/L25 subcomplex. Contacts the 5S rRNA and the P site tRNA. Forms a bridge to the 30S subunit in the 70S ribosome.

This is one of the proteins that bind and probably mediate the attachment of the 5S RNA into the large ribosomal subunit, where it forms part of the central protuberance. In the 70S ribosome it contacts protein S13 of the 30S subunit (bridge B1b), connecting the 2 subunits; this bridge is implicated in subunit movement. Contacts the P site tRNA; the 5S rRNA and some of its associated proteins might help stabilize positioning of ribosome-bound tRNAs. The sequence is that of Large ribosomal subunit protein uL5 from Bacillus cereus (strain 03BB102).